The chain runs to 537 residues: Atrial natriuretic peptide receptor 3 (537 aa).

An N-terminal signal peptide occupies residues methionine 1–leucine 20. The propeptide occupies alanine 21–arginine 41. Residues glutamate 42–glutamate 477 lie on the Extracellular side of the membrane. Asparagine 82 carries an N-linked (GlcNAc...) asparagine glycan. 2 cysteine pairs are disulfide-bonded: cysteine 104/cysteine 132 and cysteine 209/cysteine 257. 2 N-linked (GlcNAc...) asparagine glycosylation sites follow: asparagine 289 and asparagine 390. Residues serine 478–phenylalanine 500 form a helical membrane-spanning segment. The Cytoplasmic segment spans residues arginine 501–alanine 537.

It belongs to the ANF receptor family. Homodimer; disulfide-linked. Interacts with OSTN.

It is found in the cell membrane. In terms of biological role, receptor for the natriuretic peptide hormones, binding with similar affinities atrial natriuretic peptide NPPA/ANP, brain natriuretic peptide NPPB/BNP, and C-type natriuretic peptide NPPC/CNP. May function as a clearance receptor for NPPA, NPPB and NPPC, regulating their local concentrations and effects. Acts as a regulator of osteoblast differentiation and bone growth by binding to its ligand osteocrin, thereby preventing binding between NPR3/NPR-C and natriuretic peptides, leading to increase cGMP production. This Bos taurus (Bovine) protein is Atrial natriuretic peptide receptor 3 (NPR3).